Consider the following 430-residue polypeptide: Histidine--tRNA ligase, chloroplastic (430 aa).

It belongs to the class-II aminoacyl-tRNA synthetase family.

The protein localises to the plastid. Its subcellular location is the chloroplast. The enzyme catalyses tRNA(His) + L-histidine + ATP = L-histidyl-tRNA(His) + AMP + diphosphate + H(+). This Porphyra purpurea (Red seaweed) protein is Histidine--tRNA ligase, chloroplastic (hisS).